A 283-amino-acid chain; its full sequence is Non-selective voltage-gated ion channel VDAC3 (283 aa).

Cys2 is subject to N-acetylcysteine. Residue Thr4 is modified to Phosphothreonine. An N6-acetyllysine mark is found at Lys12, Lys15, and Lys20. Transmembrane regions (beta stranded) follow at residues 26-35 (MVKIDLRTKS) and 39-47 (VEFSTSGHA). Residue Lys53 forms a Glycyl lysine isopeptide (Lys-Gly) (interchain with G-Cter in ubiquitin) linkage. 3 consecutive transmembrane segments (beta stranded) span residues 54-64 (ASGNLETKYKI), 69-76 (LTFTQKWN), and 80-89 (TLGTEISLEN). An N6-acetyllysine modification is found at Lys90. The beta stranded transmembrane segment at 95-104 (LKLTLDTIFV) threads the bilayer. Glycyl lysine isopeptide (Lys-Gly) (interchain with G-Cter in ubiquitin) cross-links involve residues Lys109 and Lys110. Transmembrane regions (beta stranded) follow at residues 111–120 (SGKLKASYKR), 123–130 (FSIGSNVD), 137–145 (TIYGWAVLA), 150–158 (LAGYQMSFD), 163–175 (KLSQNNFALGYKA), 178–185 (FQLHTHVN), 189–198 (EFGGSIYQKV), 202–211 (IETSINLAWT), 218–227 (RFGIAAKYKL), and 231–238 (TSLSAKVN). The residue at position 241 (Ser241) is a Phosphoserine. Residues 242-244 (LIG) and 260-264 (SALID) contribute to the NAD(+) site. The next 2 membrane-spanning stretches (beta stranded) occupy residues 242–251 (LIGLGYTQTL) and 254–263 (GVKLTLSALI). Lys266 is subject to N6-acetyllysine; alternate. A Glycyl lysine isopeptide (Lys-Gly) (interchain with G-Cter in ubiquitin); alternate cross-link involves residue Lys266. A beta stranded transmembrane segment spans residues 273–282 (HKVGLGFELE).

It belongs to the eukaryotic mitochondrial porin family. In terms of assembly, interacts with ARMC12 in a TBC1D21-dependent manner. Interacts with MISFA. Post-translationally, ubiquitinated by PRKN during mitophagy, leading to its degradation and enhancement of mitophagy. Deubiquitinated by USP30.

It is found in the mitochondrion outer membrane. It localises to the membrane. The catalysed reaction is chloride(in) = chloride(out). It carries out the reaction K(+)(in) = K(+)(out). Its function is as follows. Non-selective voltage-gated ion channel that mediates the transport of anions and cations through the mitochondrion outer membrane and plasma membrane. Forms a high-conducting channel with a stable open state and a voltage-induced closure with a mild preference for anions over cations. Involved in male fertility and sperm mitochondrial sheath formation. This is Non-selective voltage-gated ion channel VDAC3 from Sus scrofa (Pig).